The chain runs to 123 residues: Ig heavy chain V region HPCM6 (123 aa).

An Ig-like domain is found at 1-114 (EVKLVESGGG…YPHWYFDVWG (114 aa)).

This is Ig heavy chain V region HPCM6 from Mus musculus (Mouse).